We begin with the raw amino-acid sequence, 273 residues long: Progestin and adipoQ receptor family member 4 (273 aa).

Helical transmembrane passes span Ile52 to Trp72, Gly79 to Tyr99, Leu115 to Ile135, Leu185 to Cys205, and Leu245 to Ala265.

Belongs to the ADIPOR family. In terms of assembly, interacts with CERS2 and CERS5; the interaction regulates CERS2 and CERS5 stabilities and activities and is inhibited in presence of ceramides. In terms of tissue distribution, expressed in adipose tissue.

The protein resides in the golgi apparatus membrane. In terms of biological role, plays a role in maintaining adipose tissue function through the regulation of ceramide levels. Mediates the stability of ceramide synthetases, CERS2 and CERS5, and their activities. This chain is Progestin and adipoQ receptor family member 4, found in Mus musculus (Mouse).